A 122-amino-acid polypeptide reads, in one-letter code: UPF0102 protein Gmet_2864 (122 aa).

Belongs to the UPF0102 family.

The sequence is that of UPF0102 protein Gmet_2864 from Geobacter metallireducens (strain ATCC 53774 / DSM 7210 / GS-15).